We begin with the raw amino-acid sequence, 557 residues long: Pectinesterase/pectinesterase inhibitor 18 (557 aa).

An N-terminal signal peptide occupies residues 1 to 34; that stretch reads MSNSNQPLLSKPKSLKHKNLCLVLSFVAILGSVA. The tract at residues 47-203 is pectinesterase inhibitor 18; sequence NNDDSLLTTS…VSRARVALAI (157 aa). The interval 246–543 is pectinesterase 18; that stretch reads NVVVAKDGTG…FTVAKLIQGG (298 aa). 2 residues coordinate substrate: threonine 321 and glutamine 351. Residue aspartate 374 is the Proton donor; for pectinesterase activity of the active site. The active-site Nucleophile; for pectinesterase activity is the aspartate 395. Positions 463 and 465 each coordinate substrate.

It in the N-terminal section; belongs to the PMEI family. The protein in the C-terminal section; belongs to the pectinesterase family. Expressed in siliques, flowers, floral stems, rosette leaves and roots.

Its subcellular location is the secreted. It is found in the cell wall. It catalyses the reaction [(1-&gt;4)-alpha-D-galacturonosyl methyl ester](n) + n H2O = [(1-&gt;4)-alpha-D-galacturonosyl](n) + n methanol + n H(+). It carries out the reaction Endohydrolysis of the N-glycosidic bond at one specific adenosine on the 28S rRNA.. It functions in the pathway glycan metabolism; pectin degradation; 2-dehydro-3-deoxy-D-gluconate from pectin: step 1/5. In terms of biological role, acts in the modification of cell walls via demethylesterification of cell wall pectin. Inhibits the elongation phase of protein synthesis. The sequence is that of Pectinesterase/pectinesterase inhibitor 18 (PME18) from Arabidopsis thaliana (Mouse-ear cress).